The sequence spans 35 residues: Photosystem II reaction center protein T (35 aa).

A helical transmembrane segment spans residues 3–23; that stretch reads ALVYTFLLVGTLGIIFFAIFF.

The protein belongs to the PsbT family. In terms of assembly, PSII is composed of 1 copy each of membrane proteins PsbA, PsbB, PsbC, PsbD, PsbE, PsbF, PsbH, PsbI, PsbJ, PsbK, PsbL, PsbM, PsbT, PsbY, PsbZ, Psb30/Ycf12, at least 3 peripheral proteins of the oxygen-evolving complex and a large number of cofactors. It forms dimeric complexes.

It is found in the plastid. Its subcellular location is the chloroplast thylakoid membrane. Functionally, found at the monomer-monomer interface of the photosystem II (PS II) dimer, plays a role in assembly and dimerization of PSII. PSII is a light-driven water plastoquinone oxidoreductase, using light energy to abstract electrons from H(2)O, generating a proton gradient subsequently used for ATP formation. This is Photosystem II reaction center protein T from Staurastrum punctulatum (Green alga).